A 57-amino-acid chain; its full sequence is UPF0391 membrane protein RPC_2356 (57 aa).

Helical transmembrane passes span 6 to 26 (WALIFFVVSVIVGVLGFTGIS) and 35 to 55 (ILFYIFLVIFLVLLILGLTIF).

It belongs to the UPF0391 family.

The protein resides in the cell membrane. In Rhodopseudomonas palustris (strain BisB18), this protein is UPF0391 membrane protein RPC_2356.